A 104-amino-acid chain; its full sequence is Large ribosomal subunit protein bL21c (104 aa).

The protein belongs to the bacterial ribosomal protein bL21 family. In terms of assembly, part of the 50S ribosomal subunit.

It localises to the plastid. Its subcellular location is the cyanelle. Its function is as follows. This protein binds to 23S rRNA. This is Large ribosomal subunit protein bL21c from Cyanophora paradoxa.